Reading from the N-terminus, the 261-residue chain is Receptor expression-enhancing protein 4 (261 aa).

The next 2 helical transmembrane spans lie at 1 to 21 (MVSWIISRAVVLVFGLLYPAY) and 35 to 55 (YVRWMMYWIVFALFMTVETFT). A disordered region spans residues 177-261 (ELHRRPIGYP…KKPAQSEPEN (85 aa)). Basic and acidic residues predominate over residues 191-202 (ADSDSMDERWSD).

This sequence belongs to the DP1 family. In terms of assembly, interacts with microtubules. As to expression, during gastrulation, expressed on the dorsal side of the embryo and then in the neural plate and neural tube. At tailbud stages, expressed in the somites. Expressed in the neural tube later in development.

It localises to the endoplasmic reticulum membrane. Functionally, microtubule-binding protein required to ensure proper cell division and nuclear envelope reassembly by sequestering the endoplasmic reticulum away from chromosomes during mitosis. Probably acts by clearing the endoplasmic reticulum membrane from metaphase chromosomes. May play a role in the maintenance of both the nervous system and the musculature. The chain is Receptor expression-enhancing protein 4 (reep4) from Xenopus tropicalis (Western clawed frog).